The following is a 528-amino-acid chain: Protein arginine N-methyltransferase 3 (528 aa).

Residues 1 to 43 (MCSLAAGNGRGAELGPEPLELSDSGDDAGWEDEDADTEPAHGR) form a disordered region. Position 2 is an N-acetylcysteine (C2). 2 positions are modified to phosphoserine: S22 and S24. The segment covering 23–37 (DSGDDAGWEDEDADT) has biased composition (acidic residues). The C2H2-type zinc finger occupies 46-69 (TPCLFCDRLFASAEETFSHCKLEH). Residue S169 is modified to Phosphoserine. The mediates interaction with ALDH1A1 stretch occupies residues 184–528 (MKQFAQDFVM…NSSTQTYSLQ (345 aa)). The 315-residue stretch at 214–528 (DGVYFSSYGH…NSSTQTYSLQ (315 aa)) folds into the SAM-dependent MTase PRMT-type domain. R236, G260, D282, S284, I310, and E311 together coordinate S-adenosyl-L-homocysteine. Active-site residues include E326 and E335.

The protein belongs to the class I-like SAM-binding methyltransferase superfamily. Protein arginine N-methyltransferase family. Monomer and homodimer. Interacts with EPB41L3 (via FERM domain); the interaction is direct and inhibits the protein-arginine N-methyltransferase activity of PRMT3. Interacts with the 40S ribosomal protein RPS2. Interacts with ALDH1A1; the interaction is direct, inhibits ALDH1A1 aldehyde dehydrogenase activity and is independent of the methyltransferase activity of PRMT3.

The protein localises to the cytoplasm. The protein resides in the cytosol. Its subcellular location is the nucleus. It catalyses the reaction L-arginyl-[protein] + S-adenosyl-L-methionine = N(omega)-methyl-L-arginyl-[protein] + S-adenosyl-L-homocysteine + H(+). The catalysed reaction is L-arginyl-[protein] + 2 S-adenosyl-L-methionine = N(omega),N(omega)-dimethyl-L-arginyl-[protein] + 2 S-adenosyl-L-homocysteine + 2 H(+). Its activity is regulated as follows. Inhibited by N-ethylmaleimide and high concentrations of zinc chloride. Functionally, protein-arginine N-methyltransferase that catalyzes both the monomethylation and asymmetric dimethylation of the guanidino nitrogens of arginine residues in target proteins, and therefore falls into the group of type I methyltransferases. Catalyzes the asymmetric arginine dimethylation at multiple sites in the Arg/Gly-rich region of small ribosomal subunit protein uS5/RPS2. Also appears to methylate other ribosomal proteins. May regulate retinoic acid synthesis and signaling by inhibiting ALDH1A1 retinal dehydrogenase activity. Contributes to methylation of histone H4 'Arg-3', a specific tag for epigenetic transcriptional activation. Promotes osteogenesis. The polypeptide is Protein arginine N-methyltransferase 3 (Mus musculus (Mouse)).